A 387-amino-acid polypeptide reads, in one-letter code: Formate-dependent phosphoribosylglycinamide formyltransferase (387 aa).

N(1)-(5-phospho-beta-D-ribosyl)glycinamide-binding positions include 15 to 16 (EL) and Glu-75. Residues Arg-106, Lys-147, 152-157 (SSGKGQ), 187-190 (EEFI), and Glu-195 contribute to the ATP site. Residues 111–301 (DLASNELNIR…EFELHLRAVL (191 aa)) form the ATP-grasp domain. Mg(2+) contacts are provided by Glu-260 and Glu-272. Residues Asp-279, Lys-349, and 356–357 (RR) contribute to the N(1)-(5-phospho-beta-D-ribosyl)glycinamide site.

Belongs to the PurK/PurT family. In terms of assembly, homodimer.

The enzyme catalyses N(1)-(5-phospho-beta-D-ribosyl)glycinamide + formate + ATP = N(2)-formyl-N(1)-(5-phospho-beta-D-ribosyl)glycinamide + ADP + phosphate + H(+). It participates in purine metabolism; IMP biosynthesis via de novo pathway; N(2)-formyl-N(1)-(5-phospho-D-ribosyl)glycinamide from N(1)-(5-phospho-D-ribosyl)glycinamide (formate route): step 1/1. Its function is as follows. Involved in the de novo purine biosynthesis. Catalyzes the transfer of formate to 5-phospho-ribosyl-glycinamide (GAR), producing 5-phospho-ribosyl-N-formylglycinamide (FGAR). Formate is provided by PurU via hydrolysis of 10-formyl-tetrahydrofolate. The sequence is that of Formate-dependent phosphoribosylglycinamide formyltransferase from Prochlorococcus marinus (strain NATL1A).